The following is a 210-amino-acid chain: Protein GrpE (210 aa).

Residues 1–71 are disordered; it reads MSEKDQSVNN…DTKIKELEKL (71 aa). Residues 11-23 are compositionally biased toward acidic residues; sequence TEEDFNVETEDNQ. Polar residues predominate over residues 24 to 35; that stretch reads NDTNIENSVSNT. The segment covering 36 to 46 has biased composition (low complexity); it reads DNSEANASDSE. Residues 47-60 are compositionally biased toward acidic residues; that stretch reads NNSEESIKDEESES. A compositionally biased stretch (basic and acidic residues) spans 61-71; it reads QDTKIKELEKL.

The protein belongs to the GrpE family. As to quaternary structure, homodimer.

The protein localises to the cytoplasm. Its function is as follows. Participates actively in the response to hyperosmotic and heat shock by preventing the aggregation of stress-denatured proteins, in association with DnaK and GrpE. It is the nucleotide exchange factor for DnaK and may function as a thermosensor. Unfolded proteins bind initially to DnaJ; upon interaction with the DnaJ-bound protein, DnaK hydrolyzes its bound ATP, resulting in the formation of a stable complex. GrpE releases ADP from DnaK; ATP binding to DnaK triggers the release of the substrate protein, thus completing the reaction cycle. Several rounds of ATP-dependent interactions between DnaJ, DnaK and GrpE are required for fully efficient folding. In Staphylococcus epidermidis (strain ATCC 35984 / DSM 28319 / BCRC 17069 / CCUG 31568 / BM 3577 / RP62A), this protein is Protein GrpE.